Consider the following 54-residue polypeptide: Light-harvesting protein B-880 beta chain (54 aa).

The Cytoplasmic segment spans residues 1–20 (AEDRSSLSGVSDAEAKEFHA). A bacteriochlorophyll is bound by residues His19 and His37. The helical transmembrane segment at 21–43 (LFVSSFMGFMVVAVLAHVLAWAW) threads the bilayer. At 44-54 (RPWIPGPKGWA) the chain is on the periplasmic side.

The protein belongs to the antenna complex beta subunit family. As to quaternary structure, the core complex is formed by different alpha and beta chains, binding bacteriochlorophyll molecules, and arranged most probably in tetrameric structures disposed around the reaction center. The non-pigmented gamma chains may constitute additional components.

It is found in the cell inner membrane. Antenna complexes are light-harvesting systems, which transfer the excitation energy to the reaction centers. This is Light-harvesting protein B-880 beta chain from Rhodoblastus acidophilus (Rhodopseudomonas acidophila).